A 294-amino-acid polypeptide reads, in one-letter code: Ribosomal RNA small subunit methyltransferase A (294 aa).

Positions 31, 33, 58, 79, 104, and 129 each coordinate S-adenosyl-L-methionine.

Belongs to the class I-like SAM-binding methyltransferase superfamily. rRNA adenine N(6)-methyltransferase family. RsmA subfamily.

The protein localises to the cytoplasm. The enzyme catalyses adenosine(1518)/adenosine(1519) in 16S rRNA + 4 S-adenosyl-L-methionine = N(6)-dimethyladenosine(1518)/N(6)-dimethyladenosine(1519) in 16S rRNA + 4 S-adenosyl-L-homocysteine + 4 H(+). Its function is as follows. Specifically dimethylates two adjacent adenosines (A1518 and A1519) in the loop of a conserved hairpin near the 3'-end of 16S rRNA in the 30S particle. May play a critical role in biogenesis of 30S subunits. The sequence is that of Ribosomal RNA small subunit methyltransferase A from Oceanobacillus iheyensis (strain DSM 14371 / CIP 107618 / JCM 11309 / KCTC 3954 / HTE831).